A 470-amino-acid chain; its full sequence is Glutamate--tRNA ligase 2 (470 aa).

The 'HIGH' region signature appears at 11-21 (PSPTGHLHLGG). The 'KMSKS' region motif lies at 238–242 (KLSKR). Lys241 contributes to the ATP binding site.

It belongs to the class-I aminoacyl-tRNA synthetase family. Glutamate--tRNA ligase type 1 subfamily. In terms of assembly, monomer.

The protein localises to the cytoplasm. The catalysed reaction is tRNA(Glu) + L-glutamate + ATP = L-glutamyl-tRNA(Glu) + AMP + diphosphate. In terms of biological role, catalyzes the attachment of glutamate to tRNA(Glu) in a two-step reaction: glutamate is first activated by ATP to form Glu-AMP and then transferred to the acceptor end of tRNA(Glu). This Ehrlichia ruminantium (strain Gardel) protein is Glutamate--tRNA ligase 2.